The chain runs to 529 residues: Acid-sensing ion channel 1C (529 aa).

Residues 1–51 (MTAMKGDSEDSIESMRPSNLQVFANNSTLHGMSHIFAYGHMTFRRFLWTLS) are Cytoplasmic-facing. A helical transmembrane segment spans residues 52–68 (FMGSLGLLMYVCMDRVY). Over 69–427 (YYFEFPHVTK…EKIEQKKAYE (359 aa)) the chain is Extracellular. Asparagine 86, asparagine 155, and asparagine 161 each carry an N-linked (GlcNAc...) asparagine glycan. Intrachain disulfides connect cysteine 95–cysteine 196, cysteine 174–cysteine 181, cysteine 292–cysteine 367, cysteine 310–cysteine 363, cysteine 314–cysteine 361, cysteine 323–cysteine 345, and cysteine 325–cysteine 337. A glycan (N-linked (GlcNAc...) asparagine) is linked at asparagine 185. N-linked (GlcNAc...) asparagine glycans are attached at residues asparagine 368 and asparagine 395. The chain crosses the membrane as a discontinuously helical span at residues 428-458 (VAGLLGDIGGQMGLFIGASVLTILEIFDYLY). The short motif at 444–446 (GAS) is the GAS motif; ion selectivity filter element. Topologically, residues 459–529 (EVLKDKILGS…PFVVGSNSGK (71 aa)) are cytoplasmic.

This sequence belongs to the amiloride-sensitive sodium channel (TC 1.A.6) family. ASIC1 subfamily. In terms of assembly, homotrimer. Heterotrimer; with other ASIC proteins producing channel with different properties. Interacts with asic1a. In terms of tissue distribution, expressed in central nervous system.

Its subcellular location is the cell membrane. It localises to the postsynaptic cell membrane. It is found in the cell projection. The protein localises to the dendrite. The enzyme catalyses Na(+)(in) = Na(+)(out). The catalysed reaction is K(+)(in) = K(+)(out). It catalyses the reaction Li(+)(in) = Li(+)(out). It carries out the reaction Ca(2+)(in) = Ca(2+)(out). Its activity is regulated as follows. Inhibited by the diuretic drug amiloride. Its function is as follows. Forms voltage-independent, pH-gated trimeric sodium channels that act as postsynaptic excitatory receptors in the nervous system, playing a crucial role in regulating synaptic plasticity, learning, and memory. Upon extracellular pH drop this channel elicits transient, fast activating, and completely desensitizing inward currents. Displays high selectivity for sodium ions but can also permit the permeation of other cations. The protein is Acid-sensing ion channel 1C of Danio rerio (Zebrafish).